The chain runs to 143 residues: Potassium voltage-gated channel subfamily E regulatory beta subunit 5 (143 aa).

N-linked (GlcNAc...) asparagine glycans are attached at residues Asn-2 and Asn-25. The helical transmembrane segment at 61 to 81 (LYILLIMIFYACLAGGLILAY) threads the bilayer. Residues 82–143 (TRSRKLVEAK…PALAQGAERV (62 aa)) are Cytoplasmic-facing.

The protein belongs to the potassium channel KCNE family. In terms of assembly, interacts with KCNQ1; impairs KCNQ1 localization in lipid rafts and only conducts current upon strong and continued depolarization. In terms of tissue distribution, detected in embryonal dorsal root and nerve ganglia, in the somites and in myoepicardial layer of the developing heart wall. Detected at lower levels in the central nervous system (CNS) and in developing limb.

It is found in the membrane. Potassium channel ancillary subunit that is essential for generation of some native K(+) currents by virtue of formation of heteromeric ion channel complex with voltage-gated potassium (Kv) channel pore-forming alpha subunits. Functions as an inhibitory beta-subunit of the repolarizing cardiac potassium ion channel KCNQ1. The protein is Potassium voltage-gated channel subfamily E regulatory beta subunit 5 (Kcne5) of Mus musculus (Mouse).